A 711-amino-acid polypeptide reads, in one-letter code: C6 finger domain transcription factor nscR (711 aa).

Residues 17–43 (CELCRERKVKCDKLDPCTNCSSAGVIC) constitute a DNA-binding region (zn(2)-C6 fungal-type). Residues 372–394 (SPPKHINDSDFDPTTSHDVPDRE) form a disordered region.

Its subcellular location is the nucleus. Functionally, transcription factor that specifically regulates the neosartoricin B biosynthesis gene cluster. This chain is C6 finger domain transcription factor nscR, found in Trichophyton tonsurans (strain CBS 112818) (Scalp ringworm fungus).